A 256-amino-acid chain; its full sequence is Signal peptidase I (256 aa).

Residues S32 and K75 contribute to the active site.

It belongs to the peptidase S26 family.

It carries out the reaction Cleavage of hydrophobic, N-terminal signal or leader sequences from secreted and periplasmic proteins.. The protein is Signal peptidase I (lepB) of Aquifex aeolicus (strain VF5).